A 228-amino-acid chain; its full sequence is Probable septum site-determining protein MinC (228 aa).

This sequence belongs to the MinC family. As to quaternary structure, interacts with MinD and FtsZ.

Cell division inhibitor that blocks the formation of polar Z ring septums. Rapidly oscillates between the poles of the cell to destabilize FtsZ filaments that have formed before they mature into polar Z rings. Prevents FtsZ polymerization. The sequence is that of Probable septum site-determining protein MinC from Oceanobacillus iheyensis (strain DSM 14371 / CIP 107618 / JCM 11309 / KCTC 3954 / HTE831).